The following is a 487-amino-acid chain: Probable cytochrome P450 516A1 (487 aa).

Residues 1 to 21 (MIILLLSIIIFILYIVKIFKN) traverse the membrane as a helical segment. C434 contacts heme.

It belongs to the cytochrome P450 family. It depends on heme as a cofactor.

It localises to the membrane. This chain is Probable cytochrome P450 516A1 (cyp516A1), found in Dictyostelium discoideum (Social amoeba).